The chain runs to 64 residues: MPKMKSHRGACKRFKATASGKVKRERMNGSHNLEHKNRKRTRRLHQSTLVDSTKEKQIKRMILA.

Residues 19 to 41 (SGKVKRERMNGSHNLEHKNRKRT) form a disordered region. A compositionally biased stretch (basic and acidic residues) spans 25–35 (ERMNGSHNLEH).

It belongs to the bacterial ribosomal protein bL35 family.

This Chlorobaculum tepidum (strain ATCC 49652 / DSM 12025 / NBRC 103806 / TLS) (Chlorobium tepidum) protein is Large ribosomal subunit protein bL35.